Reading from the N-terminus, the 224-residue chain is MGQKINPLGFRLGTTQNHHSFWFAQPKNYSEGLQEDKKIRNCIKNYIQKNRKKGSNRKMESDSSSEVITHIEIQKEIDTIHVIIHIGFPNLLKKKGAIEELEKDLQKEVNSVNQRLNIAIEKVKEPYRQPNILAEYIAFQLKNRVSFRKAMKKAIELTKKADIKGIKIQIAGRLAGKEIARAECIKKGRLPLQTIRAKIDYCCYPIRTIYGVLGVKIWIFVEEE.

Residues 43 to 124 enclose the KH type-2 domain; sequence IKNYIQKNRK…RLNIAIEKVK (82 aa).

The protein belongs to the universal ribosomal protein uS3 family. In terms of assembly, part of the 30S ribosomal subunit.

The protein resides in the plastid. It is found in the chloroplast. The sequence is that of Small ribosomal subunit protein uS3c (rps3) from Saccharum hybrid (Sugarcane).